The chain runs to 1025 residues: Leucyl-cystinyl aminopeptidase (1025 aa).

Position 1 is an N-acetylmethionine (Met1). Topologically, residues Met1 to Arg109 are cytoplasmic. The Dileucine internalization motif signature appears at Leu53–Leu54. Tyr70 carries the post-translational modification Phosphotyrosine. The Dileucine internalization motif motif lies at Leu76–Leu77. Residues Ser80 and Ser91 each carry the phosphoserine; by PKC/PRKCZ; in vitro modification. The tract at residues Arg96–Gly101 is tankyrase binding. A helical; Signal-anchor for type II membrane protein transmembrane segment spans residues Thr110–Leu131. The Extracellular portion of the chain corresponds to Pro132 to Leu1025. N-linked (GlcNAc...) asparagine glycans are attached at residues Asn145, Asn184, Asn215, Asn256, and Asn266. Glu295 is a binding site for substrate. N-linked (GlcNAc...) asparagine glycosylation is found at Asn368 and Asn374. Gly428–Asn432 contributes to the substrate binding site. Asn447 carries N-linked (GlcNAc...) asparagine glycosylation. His464 serves as a coordination point for Zn(2+). The active-site Proton acceptor is the Glu465. Residues His468 and Glu487 each contribute to the Zn(2+) site. N-linked (GlcNAc...) asparagine glycosylation is found at Asn525, Asn578, Asn664, Asn682, Asn695, Asn758, Asn834, Asn850, and Asn989.

Belongs to the peptidase M1 family. As to quaternary structure, homodimer. Binds tankyrases 1 and 2. Zn(2+) is required as a cofactor. Post-translationally, N-glycosylated. Highly expressed in heart, brain, spleen, lung, kidney and white adipose tissue. Detected at lower levels in skeletal muscle and liver.

It is found in the cell membrane. The protein resides in the endomembrane system. The catalysed reaction is Release of an N-terminal amino acid, Cys-|-Xaa-, in which the half-cystine residue is involved in a disulfide loop, notably in oxytocin or vasopressin. Hydrolysis rates on a range of aminoacyl arylamides exceed that for the cystinyl derivative, however.. Functionally, release of an N-terminal amino acid, cleave before cysteine, leucine as well as other amino acids. Degrades peptide hormones such as oxytocin, vasopressin and angiotensin III, and plays a role in maintaining homeostasis during pregnancy. May be involved in the inactivation of neuronal peptides in the brain. Cleaves Met-enkephalin and dynorphin. Binds angiotensin IV and may be the angiotensin IV receptor in the brain. The chain is Leucyl-cystinyl aminopeptidase (Lnpep) from Rattus norvegicus (Rat).